A 296-amino-acid chain; its full sequence is uncharacterized protein (296 aa).

6 consecutive transmembrane segments (helical) span residues 10–29, 36–58, 112–131, 188–210, 241–260, and 273–295; these read FSTL…FSLL, YIVL…YYIL, FFAL…MFVT, ILIF…LYLR, MMYG…SAYF, and MYIS…VTYI.

Its subcellular location is the cell membrane. This is an uncharacterized protein from Clostridium acetobutylicum (strain ATCC 824 / DSM 792 / JCM 1419 / IAM 19013 / LMG 5710 / NBRC 13948 / NRRL B-527 / VKM B-1787 / 2291 / W).